The primary structure comprises 505 residues: Deoxyguanosinetriphosphate triphosphohydrolase (505 aa).

The HD domain maps to 66-273 (RLTHSMEVQQ…MEAADDISYC (208 aa)).

The protein belongs to the dGTPase family. Type 1 subfamily. As to quaternary structure, homotetramer. Mg(2+) is required as a cofactor.

The enzyme catalyses dGTP + H2O = 2'-deoxyguanosine + triphosphate + H(+). Its function is as follows. dGTPase preferentially hydrolyzes dGTP over the other canonical NTPs. The polypeptide is Deoxyguanosinetriphosphate triphosphohydrolase (Salmonella paratyphi A (strain AKU_12601)).